Reading from the N-terminus, the 229-residue chain is Triosephosphate isomerase (229 aa).

6-8 (NFK) lines the substrate pocket. Histidine 88 acts as the Electrophile in catalysis. Catalysis depends on glutamate 157, which acts as the Proton acceptor. Glycine 163 and serine 193 together coordinate substrate.

The protein belongs to the triosephosphate isomerase family. As to quaternary structure, homodimer.

The protein localises to the cytoplasm. It catalyses the reaction D-glyceraldehyde 3-phosphate = dihydroxyacetone phosphate. Its pathway is carbohydrate biosynthesis; gluconeogenesis. The protein operates within carbohydrate degradation; glycolysis; D-glyceraldehyde 3-phosphate from glycerone phosphate: step 1/1. Functionally, involved in the gluconeogenesis. Catalyzes stereospecifically the conversion of dihydroxyacetone phosphate (DHAP) to D-glyceraldehyde-3-phosphate (G3P). The sequence is that of Triosephosphate isomerase from Sulfurovum sp. (strain NBC37-1).